We begin with the raw amino-acid sequence, 224 residues long: Peptidyl-tRNA hydrolase (224 aa).

Tyr27 provides a ligand contact to tRNA. His32 acts as the Proton acceptor in catalysis. 3 residues coordinate tRNA: Tyr78, Asn80, and Asn126. Low complexity predominate over residues 203-215 (LSGPSSDLDGSNP). A disordered region spans residues 203–224 (LSGPSSDLDGSNPAPGHGEASS).

This sequence belongs to the PTH family. As to quaternary structure, monomer.

It is found in the cytoplasm. The enzyme catalyses an N-acyl-L-alpha-aminoacyl-tRNA + H2O = an N-acyl-L-amino acid + a tRNA + H(+). In terms of biological role, hydrolyzes ribosome-free peptidyl-tRNAs (with 1 or more amino acids incorporated), which drop off the ribosome during protein synthesis, or as a result of ribosome stalling. Catalyzes the release of premature peptidyl moieties from peptidyl-tRNA molecules trapped in stalled 50S ribosomal subunits, and thus maintains levels of free tRNAs and 50S ribosomes. The protein is Peptidyl-tRNA hydrolase of Synechococcus sp. (strain JA-2-3B'a(2-13)) (Cyanobacteria bacterium Yellowstone B-Prime).